The chain runs to 906 residues: Formin-like protein 16 (906 aa).

An N-terminal signal peptide occupies residues 1–28; the sequence is MAPAPSPTPLPLFLLLLLLVGVAPLAAA. Residues 34 to 76 form a disordered region; it reads QTRFPSTRTPAFATPPPITSPSPSPGTPTATPSSSPPSSSGKR. Positions 46–59 are enriched in pro residues; sequence ATPPPITSPSPSPG. The span at 60 to 73 shows a compositional bias: low complexity; sequence TPTATPSSSPPSSS. A helical membrane pass occupies residues 81–101; it reads VAVVSTALSSFAVSGLAFFLF. 6 disordered regions span residues 113-149, 161-223, 250-404, 451-474, 677-702, and 834-906; these read AGGA…VDEN, KEGD…SLDS, AYAR…DQQA, RKTK…GRSN, GSLA…REER, and LQQQ…SDEE. Residues 114-128 are compositionally biased toward gly residues; that stretch reads GGAGQHYGGAQGGAL. Pro residues predominate over residues 174–185; sequence SRRPPQPPPPRP. Basic and acidic residues predominate over residues 186–196; it reads YRAERRQDAHE. Residues 270–294 show a composition bias toward pro residues; that stretch reads SPSPAPAPAARPASPSPSLPLPPGR. Residues 295–310 are compositionally biased toward low complexity; it reads ESPSRPQSIAAAAVAS. Pro residues predominate over residues 311–383; sequence PAPPPPPPPK…KGGPPPPPPK (73 aa). One can recognise an FH2 domain in the interval 396-849; sequence PTGSADQQAK…PTPPPSSSQP (454 aa). Polar residues-rich tracts occupy residues 463-474 and 677-697; these read GGSTSAGLGRSN and GSLA…SQGP. Over residues 847–866 the composition is skewed to low complexity; the sequence is SQPAAPAATTKGAADDAPAP.

It belongs to the formin-like family. Class-I subfamily.

Its subcellular location is the membrane. This is Formin-like protein 16 (FH16) from Oryza sativa subsp. japonica (Rice).